The primary structure comprises 324 residues: HPr kinase/phosphorylase (324 aa).

Catalysis depends on residues H146 and K167. 161 to 168 (GDSGLGKS) provides a ligand contact to ATP. S168 is a Mg(2+) binding site. The Proton acceptor; for phosphorylation activity. Proton donor; for dephosphorylation activity role is filled by D185. An important for the catalytic mechanism of both phosphorylation and dephosphorylation region spans residues 209-218 (LEVRGLGLLD). E210 contacts Mg(2+). The active site involves R250. The interval 271–276 (QVAAGR) is important for the catalytic mechanism of dephosphorylation.

This sequence belongs to the HPrK/P family. Homohexamer. Requires Mg(2+) as cofactor.

The enzyme catalyses [HPr protein]-L-serine + ATP = [HPr protein]-O-phospho-L-serine + ADP + H(+). It carries out the reaction [HPr protein]-O-phospho-L-serine + phosphate + H(+) = [HPr protein]-L-serine + diphosphate. Functionally, catalyzes the ATP- as well as the pyrophosphate-dependent phosphorylation of a specific serine residue in HPr, a phosphocarrier protein of the phosphoenolpyruvate-dependent sugar phosphotransferase system (PTS). HprK/P also catalyzes the pyrophosphate-producing, inorganic phosphate-dependent dephosphorylation (phosphorolysis) of seryl-phosphorylated HPr (P-Ser-HPr). This Ralstonia nicotianae (strain ATCC BAA-1114 / GMI1000) (Ralstonia solanacearum) protein is HPr kinase/phosphorylase.